The following is a 335-amino-acid chain: Putative zinc metalloprotease CPE1693 (335 aa).

Zn(2+) is bound at residue His17. Glu18 is a catalytic residue. Position 21 (His21) interacts with Zn(2+). 3 consecutive transmembrane segments (helical) span residues 88 to 110 (ILVM…IGLA), 262 to 284 (LLWF…FPAL), and 312 to 334 (TVGF…IFPI). Residues 96–174 (FMNYVLALII…PVELEIKRGN (79 aa)) enclose the PDZ domain.

Belongs to the peptidase M50B family. The cofactor is Zn(2+).

The protein localises to the cell membrane. The polypeptide is Putative zinc metalloprotease CPE1693 (Clostridium perfringens (strain 13 / Type A)).